Here is a 354-residue protein sequence, read N- to C-terminus: Hyaluronan and proteoglycan link protein 1 (354 aa).

Positions 1 to 15 (MKSLLLLVLISICGA) are excised as a propeptide. N-linked (GlcNAc...) asparagine glycans are attached at residues Asn-21 and Asn-56. Residues 38–152 (PRLLVEAEQA…EGLEDDTAVV (115 aa)) form the Ig-like V-type domain. 5 cysteine pairs are disulfide-bonded: Cys-61–Cys-139, Cys-181–Cys-252, Cys-205–Cys-226, Cys-279–Cys-349, and Cys-304–Cys-325. Link domains follow at residues 159–254 (VVFP…FCFT) and 259–351 (GRFY…YCFR).

It belongs to the HAPLN family.

It localises to the secreted. The protein localises to the extracellular space. It is found in the extracellular matrix. Its function is as follows. Stabilizes the aggregates of proteoglycan monomers with hyaluronic acid in the extracellular cartilage matrix. This chain is Hyaluronan and proteoglycan link protein 1 (HAPLN1), found in Equus caballus (Horse).